Consider the following 88-residue polypeptide: ATP synthase F(0) complex subunit f, mitochondrial (88 aa).

The residue at position 2 (alanine 2) is an N-acetylalanine. Residue serine 3 is modified to Phosphoserine. Lysine 16 is modified (N6-acetyllysine). The helical transmembrane segment at 62-79 (MVLAAYVVFNYCRSYKEL) threads the bilayer.

This sequence belongs to the ATPase F chain family. Component of the ATP synthase complex composed at least of ATP5F1A/subunit alpha, ATP5F1B/subunit beta, ATP5MC1/subunit c (homooctomer), MT-ATP6/subunit a, MT-ATP8/subunit 8, ATP5ME/subunit e, ATP5MF/subunit f, ATP5MG/subunit g, ATP5MK/subunit k, ATP5MJ/subunit j, ATP5F1C/subunit gamma, ATP5F1D/subunit delta, ATP5F1E/subunit epsilon, ATP5PF/subunit F6, ATP5PB/subunit b, ATP5PD/subunit d, ATP5PO/subunit OSCP. ATP synthase complex consists of a soluble F(1) head domain (subunits alpha(3) and beta(3)) - the catalytic core - and a membrane F(0) domain - the membrane proton channel (subunits c, a, 8, e, f, g, k and j). These two domains are linked by a central stalk (subunits gamma, delta, and epsilon) rotating inside the F1 region and a stationary peripheral stalk (subunits F6, b, d, and OSCP).

Its subcellular location is the mitochondrion. It localises to the mitochondrion inner membrane. Its function is as follows. Subunit f, of the mitochondrial membrane ATP synthase complex (F(1)F(0) ATP synthase or Complex V) that produces ATP from ADP in the presence of a proton gradient across the membrane which is generated by electron transport complexes of the respiratory chain. ATP synthase complex consist of a soluble F(1) head domain - the catalytic core - and a membrane F(1) domain - the membrane proton channel. These two domains are linked by a central stalk rotating inside the F(1) region and a stationary peripheral stalk. During catalysis, ATP synthesis in the catalytic domain of F(1) is coupled via a rotary mechanism of the central stalk subunits to proton translocation. In vivo, can only synthesize ATP although its ATP hydrolase activity can be activated artificially in vitro. Part of the complex F(0) domain. The sequence is that of ATP synthase F(0) complex subunit f, mitochondrial from Sus scrofa (Pig).